The primary structure comprises 265 residues: Transmembrane protein 270 (265 aa).

Helical transmembrane passes span 72–92, 130–150, and 185–205; these read PLGQ…WLVL, LFLS…VVTW, and LYWW…YLIT. The disordered stretch occupies residues 229–265; that stretch reads QEVEPQEVSGSSLLPSLSASSDSESGTVLPEQETPRE. The span at 237–253 shows a compositional bias: low complexity; it reads SGSSLLPSLSASSDSES.

The protein localises to the membrane. In Homo sapiens (Human), this protein is Transmembrane protein 270.